The following is a 174-amino-acid chain: Negative modulator of initiation of replication (174 aa).

The protein belongs to the SeqA family. As to quaternary structure, homodimer. Polymerizes to form helical filaments.

Its subcellular location is the cytoplasm. Functionally, negative regulator of replication initiation, which contributes to regulation of DNA replication and ensures that replication initiation occurs exactly once per chromosome per cell cycle. Binds to pairs of hemimethylated GATC sequences in the oriC region, thus preventing assembly of replication proteins and re-initiation at newly replicated origins. Repression is relieved when the region becomes fully methylated. The sequence is that of Negative modulator of initiation of replication from Pseudoalteromonas atlantica (strain T6c / ATCC BAA-1087).